The primary structure comprises 542 residues: MFS-type efflux pump MMF1 (542 aa).

The next 8 helical transmembrane spans lie at 24–44 (WTIFAALMLIAFLAALDMTMI), 51–71 (IVAALPPSSIAANWITSAFLL), 98–118 (VIFLVGSIVCATAKSVLVLVV), 124–144 (GLGGGGIHALSEIIMSDLTTL), 151–171 (FGLIALVFAVAGFIAPVLGGV), 179–199 (WIFWINLPIGAVALVLLVLFL), 215–235 (LDLVGNAILFGSVTAVLIAVT), and 248–268 (VWVPLVVGLIGLVAFLMVEWI). An N-linked (GlcNAc...) asparagine glycan is attached at Asn-285. 6 helical membrane passes run 296–316 (FLHGVIFYGIIYMVPIYFQAI), 326–346 (IWSFPLTAPSTPLALIAGLLI), 355–375 (LIFIGWALMAGGVGWLTHWSV), 384–404 (ISQIIAGAGIGIMFPITLPPI), 419–439 (AYAFSRTFGAVWGITGATTIF), and 490–510 (ISDSFWLFVPLAIIGFASTFL).

The protein belongs to the major facilitator superfamily.

It is found in the cell membrane. Its function is as follows. Glycosyltransferase; part of the gene cluster that mediates the biosynthesis of mannosylerythritol lipids (MELs), surface-active substances that enhance the availability of water-insoluble substrates. MMF1 is directly involved in the secretiopn of MALs. The protein is MFS-type efflux pump MMF1 of Pseudozyma antarctica (strain T-34) (Yeast).